The sequence spans 146 residues: Large ribosomal subunit protein bL9 (146 aa).

This sequence belongs to the bacterial ribosomal protein bL9 family.

Its function is as follows. Binds to the 23S rRNA. This is Large ribosomal subunit protein bL9 from Deinococcus deserti (strain DSM 17065 / CIP 109153 / LMG 22923 / VCD115).